The chain runs to 230 residues: MSTEPVSQHDPLALAGLMQLVSPALPIGAFAWSQGLESALELGWVDDEASLGEWLAGVLDDGLTRCELPVLARVHRAWAEGDAQALAHWNDWLQANRETRELLEEEQRLGGTLVRLLRSLDQVPVTPAMPETPGYVVVFALAARVRGVSREDAMLGFAWAWLENQLTVACKALPLGQTSAQRLVERLRPALVAAVSEALALDDDDLGPALPGLALASALHETQYSRLFRS.

It belongs to the UreF family. As to quaternary structure, ureD, UreF and UreG form a complex that acts as a GTP-hydrolysis-dependent molecular chaperone, activating the urease apoprotein by helping to assemble the nickel containing metallocenter of UreC. The UreE protein probably delivers the nickel.

It is found in the cytoplasm. Functionally, required for maturation of urease via the functional incorporation of the urease nickel metallocenter. This chain is Urease accessory protein UreF, found in Chromohalobacter salexigens (strain ATCC BAA-138 / DSM 3043 / CIP 106854 / NCIMB 13768 / 1H11).